The sequence spans 474 residues: Amidophosphoribosyltransferase (474 aa).

A propeptide spanning residues 1–10 is cleaved from the precursor; the sequence is MLGESEVRDK. The active-site Nucleophile is the Cys-11. A Glutamine amidotransferase type-2 domain is found at 11–234; the sequence is CGIVGIYSQD…PGEILHLNRG (224 aa). Residue Cys-250 coordinates [4Fe-4S] cluster. Mg(2+)-binding residues include Ser-297, Asp-359, and Asp-360. 3 residues coordinate [4Fe-4S] cluster: Cys-396, Cys-447, and Cys-450.

In the C-terminal section; belongs to the purine/pyrimidine phosphoribosyltransferase family. Mg(2+) is required as a cofactor. [4Fe-4S] cluster serves as cofactor.

The catalysed reaction is 5-phospho-beta-D-ribosylamine + L-glutamate + diphosphate = 5-phospho-alpha-D-ribose 1-diphosphate + L-glutamine + H2O. It participates in purine metabolism; IMP biosynthesis via de novo pathway; N(1)-(5-phospho-D-ribosyl)glycinamide from 5-phospho-alpha-D-ribose 1-diphosphate: step 1/2. In terms of biological role, catalyzes the formation of phosphoribosylamine from phosphoribosylpyrophosphate (PRPP) and glutamine. The sequence is that of Amidophosphoribosyltransferase from Methanothermobacter thermautotrophicus (strain ATCC 29096 / DSM 1053 / JCM 10044 / NBRC 100330 / Delta H) (Methanobacterium thermoautotrophicum).